Reading from the N-terminus, the 208-residue chain is Histone H1t (208 aa).

The span at 1 to 12 shows a compositional bias: polar residues; that stretch reads MSETAPAASSTL. The tract at residues 1 to 39 is disordered; that stretch reads MSETAPAASSTLVPAPVEKPATKRRGKKPGMATARKPRG. A Phosphoserine modification is found at Ser9. One can recognise an H15 domain in the interval 38 to 111; sequence RGFSVSKLIP…GASGSFKLSK (74 aa). Citrulline is present on Arg56. Positions 93–208 are disordered; that stretch reads GVLVQTKGTG…TDLRKAAGRK (116 aa). Basic residues predominate over residues 121–134; that stretch reads KGKKSASAKAKKLG. Ser141 carries the phosphoserine modification. A compositionally biased stretch (basic residues) spans 143–154; sequence KSSKTKVVKKPK. At Thr156 the chain carries Phosphothreonine. Phosphoserine occurs at positions 163, 178, and 187. Positions 199 to 208 are enriched in basic and acidic residues; the sequence is TDLRKAAGRK.

It belongs to the histone H1/H5 family. In terms of processing, phosphorylated in early spermatids. Citrullination at Arg-56 (H1R54ci) by PADI4 takes place within the DNA-binding site of H1 and results in its displacement from chromatin and global chromatin decondensation, thereby promoting pluripotency and stem cell maintenance. As to expression, testis-specific. Expressed in pachytene spermatocytes during meiotic prophase I.

It is found in the nucleus. The protein resides in the chromosome. Its function is as follows. Testis-specific histone H1 that forms less compacted chromatin compared to other H1 histone subtypes. Formation of more relaxed chromatin may be required to promote chromatin architecture required for proper chromosome regulation during meiosis, such as homologous recombination. Histones H1 act as linkers that bind to nucleosomes and compact polynucleosomes into a higher-order chromatin configuration. The protein is Histone H1t of Rattus norvegicus (Rat).